Reading from the N-terminus, the 383-residue chain is Galactokinase (383 aa).

34 to 37 (EHTD) is a substrate binding site. 124 to 130 (GAGLSSS) is a binding site for ATP. Mg(2+)-binding residues include Ser-130 and Glu-162. The Proton acceptor role is filled by Asp-174. Tyr-223 contributes to the substrate binding site.

Belongs to the GHMP kinase family. GalK subfamily.

It is found in the cytoplasm. It carries out the reaction alpha-D-galactose + ATP = alpha-D-galactose 1-phosphate + ADP + H(+). Its pathway is carbohydrate metabolism; galactose metabolism. In terms of biological role, catalyzes the transfer of the gamma-phosphate of ATP to D-galactose to form alpha-D-galactose-1-phosphate (Gal-1-P). The sequence is that of Galactokinase from Serratia proteamaculans (strain 568).